A 446-amino-acid chain; its full sequence is Glucarate dehydratase (446 aa).

The substrate site is built by histidine 32, threonine 103, tyrosine 150, and lysine 205. The Proton acceptor role is filled by lysine 207. Residues aspartate 235, glutamate 266, and asparagine 289 each contribute to the Mg(2+) site. 235-237 is a substrate binding site; sequence DPN. Residues asparagine 289, 339–341, histidine 368, and arginine 422 contribute to the substrate site; that span reads HSN. Histidine 339 serves as the catalytic Proton acceptor.

It belongs to the mandelate racemase/muconate lactonizing enzyme family. GlucD subfamily. As to quaternary structure, homodimer. Mg(2+) serves as cofactor.

It carries out the reaction D-glucarate = 5-dehydro-4-deoxy-D-glucarate + H2O. The protein operates within carbohydrate acid metabolism; D-glucarate degradation; 2,5-dioxopentanoate from D-glucarate: step 1/2. In terms of biological role, catalyzes the dehydration of glucarate to 5-keto-4-deoxy-D-glucarate (5-kdGluc). Also acts on L-idarate. This Escherichia coli O157:H7 protein is Glucarate dehydratase (gudD).